We begin with the raw amino-acid sequence, 241 residues long: Ribonuclease HII (241 aa).

The 185-residue stretch at 57–241 (NFIAGVDEAG…RTYVEKILKG (185 aa)) folds into the RNase H type-2 domain. A divalent metal cation-binding residues include Asp63, Glu64, and Asp155.

It belongs to the RNase HII family. Requires Mn(2+) as cofactor. Mg(2+) serves as cofactor.

The protein resides in the cytoplasm. It carries out the reaction Endonucleolytic cleavage to 5'-phosphomonoester.. Its function is as follows. Endonuclease that specifically degrades the RNA of RNA-DNA hybrids. In Caldanaerobacter subterraneus subsp. tengcongensis (strain DSM 15242 / JCM 11007 / NBRC 100824 / MB4) (Thermoanaerobacter tengcongensis), this protein is Ribonuclease HII.